A 186-amino-acid chain; its full sequence is Peptidyl-tRNA hydrolase (186 aa).

Position 16 (Tyr16) interacts with tRNA. The active-site Proton acceptor is His21. 2 residues coordinate tRNA: Tyr60 and Asn62.

The protein belongs to the PTH family. As to quaternary structure, monomer.

The protein localises to the cytoplasm. It carries out the reaction an N-acyl-L-alpha-aminoacyl-tRNA + H2O = an N-acyl-L-amino acid + a tRNA + H(+). Hydrolyzes ribosome-free peptidyl-tRNAs (with 1 or more amino acids incorporated), which drop off the ribosome during protein synthesis, or as a result of ribosome stalling. In terms of biological role, catalyzes the release of premature peptidyl moieties from peptidyl-tRNA molecules trapped in stalled 50S ribosomal subunits, and thus maintains levels of free tRNAs and 50S ribosomes. The chain is Peptidyl-tRNA hydrolase from Tropheryma whipplei (strain Twist) (Whipple's bacillus).